A 492-amino-acid polypeptide reads, in one-letter code: Probable malate:quinone oxidoreductase 1 (492 aa).

The protein belongs to the MQO family. The cofactor is FAD.

The enzyme catalyses (S)-malate + a quinone = a quinol + oxaloacetate. It participates in carbohydrate metabolism; tricarboxylic acid cycle; oxaloacetate from (S)-malate (quinone route): step 1/1. In Staphylococcus aureus (strain MW2), this protein is Probable malate:quinone oxidoreductase 1.